The sequence spans 240 residues: MIIFPAIDIKDNKCVRLTQGEFDKVNVYYDNPLEVAYKWKNEGAEYIHIVDLNGARSEFGVNTKIIEDIANNIDIPIQVGGGVRDKEKVKSLINAGVTRVILGSIAIENLNLVEELVNEYKEKIVVSIDAKDGKVAVRGWEVVSNVDSLTLCKQLEKIGVQTIVYTDISKDGMLQGPNFDIYERIAKETSLNVIASGGVTSIEDVKRLKAMNLYGAIIGKALYDKKIDFKEAQQLCLLGE.

Asp8 (proton acceptor) is an active-site residue. The active-site Proton donor is the Asp129.

It belongs to the HisA/HisF family.

Its subcellular location is the cytoplasm. The enzyme catalyses 1-(5-phospho-beta-D-ribosyl)-5-[(5-phospho-beta-D-ribosylamino)methylideneamino]imidazole-4-carboxamide = 5-[(5-phospho-1-deoxy-D-ribulos-1-ylimino)methylamino]-1-(5-phospho-beta-D-ribosyl)imidazole-4-carboxamide. The protein operates within amino-acid biosynthesis; L-histidine biosynthesis; L-histidine from 5-phospho-alpha-D-ribose 1-diphosphate: step 4/9. The chain is 1-(5-phosphoribosyl)-5-[(5-phosphoribosylamino)methylideneamino] imidazole-4-carboxamide isomerase from Clostridioides difficile (strain 630) (Peptoclostridium difficile).